Here is a 196-residue protein sequence, read N- to C-terminus: Molybdenum cofactor guanylyltransferase (196 aa).

GTP-binding positions include 10–12 (LAG), K23, N51, D69, and D99. Position 99 (D99) interacts with Mg(2+).

The protein belongs to the MobA family. In terms of assembly, monomer. The cofactor is Mg(2+).

It localises to the cytoplasm. It catalyses the reaction Mo-molybdopterin + GTP + H(+) = Mo-molybdopterin guanine dinucleotide + diphosphate. Functionally, transfers a GMP moiety from GTP to Mo-molybdopterin (Mo-MPT) cofactor (Moco or molybdenum cofactor) to form Mo-molybdopterin guanine dinucleotide (Mo-MGD) cofactor. The protein is Molybdenum cofactor guanylyltransferase of Shewanella amazonensis (strain ATCC BAA-1098 / SB2B).